The primary structure comprises 346 residues: Syntaxin UFE1 (346 aa).

The Cytoplasmic segment spans residues 1–324 (MMSDLTPIFR…RKAKRAAGRT (324 aa)). The region spanning 255–317 (LNQKNEQLKK…KKGNKELRKA (63 aa)) is the t-SNARE coiled-coil homology domain. A helical; Anchor for type IV membrane protein transmembrane segment spans residues 325–342 (AKMTTYGAIIMGVFILFL). At 343-346 (DYVG) the chain is on the lumenal side.

The protein belongs to the syntaxin family. As to quaternary structure, component of a SNARE complex consisting of UFE1, USE1, SEC20 and SEC22 or YKT6.

The protein localises to the endoplasmic reticulum membrane. Functionally, syntaxin required for targeting and fusion of Golgi-derived retrograde transport vesicles with the ER. The sequence is that of Syntaxin UFE1 (UFE1) from Saccharomyces cerevisiae (strain ATCC 204508 / S288c) (Baker's yeast).